The chain runs to 320 residues: Ferrochelatase (320 aa).

Fe cation is bound by residues H194 and E275.

Belongs to the ferrochelatase family. Monomer.

It localises to the cytoplasm. The enzyme catalyses heme b + 2 H(+) = protoporphyrin IX + Fe(2+). It participates in porphyrin-containing compound metabolism; protoheme biosynthesis; protoheme from protoporphyrin-IX: step 1/1. Its function is as follows. Catalyzes the ferrous insertion into protoporphyrin IX. In Shigella boydii serotype 18 (strain CDC 3083-94 / BS512), this protein is Ferrochelatase.